A 119-amino-acid chain; its full sequence is Beta-2-microglobulin (119 aa).

The N-terminal stretch at Met1–Ala20 is a signal peptide. The Ig-like C1-type domain occupies Pro25–Lys114. Cysteines 45 and 100 form a disulfide.

Belongs to the beta-2-microglobulin family. Heterodimer of an alpha chain and a beta chain. Beta-2-microglobulin is the beta-chain of major histocompatibility complex class I molecules.

The protein resides in the secreted. Its function is as follows. Component of the class I major histocompatibility complex (MHC). Involved in the presentation of peptide antigens to the immune system. This is Beta-2-microglobulin (B2M) from Leontocebus fuscicollis (Brown-mantled tamarin).